A 224-amino-acid polypeptide reads, in one-letter code: Small ribosomal subunit protein uS3 (224 aa).

The KH type-2 domain occupies 38–106; sequence LREFVKEKLG…EVYLNVVEVR (69 aa).

Belongs to the universal ribosomal protein uS3 family. As to quaternary structure, part of the 30S ribosomal subunit. Forms a tight complex with proteins S10 and S14.

Binds the lower part of the 30S subunit head. Binds mRNA in the 70S ribosome, positioning it for translation. This chain is Small ribosomal subunit protein uS3, found in Anaeromyxobacter dehalogenans (strain 2CP-1 / ATCC BAA-258).